A 166-amino-acid polypeptide reads, in one-letter code: Short form salivary protein D7R1 (166 aa).

The signal sequence occupies residues 1 to 21; it reads MFRKVFSVALVTCGLLVIVQA.

It belongs to the PBP/GOBP family. In terms of assembly, interacts with host coagulation factor XII (F12) (inactive and activated) (via amino acids 1-77). Interacts with host high molecular weight kininogen (KNG1) (via amino acids 402-532). Female salivary gland (at protein level).

The protein resides in the secreted. With respect to regulation, zn(2+) modulates binding to host coagulation factor XII (F12) and high molecular weight kininogen (KNG1). Its function is as follows. Salivary protein with anticoagulant activity that targets the intrinsic blood coagulation pathway in the host. Inhibits activation of the host plasma contact system by preventing the reciprocal activation of host coagulation factor XII (F12) and prekallikrein (KLKB1). Attenuates generation of bradykinin in host plasma. May bind and sequester different mediators involved in the host response, such as serotonin and histamine. This is Short form salivary protein D7R1 from Anopheles stephensi (Indo-Pakistan malaria mosquito).